The primary structure comprises 90 residues: Acylphosphatase (90 aa).

The Acylphosphatase-like domain occupies 3–90 (HYHAIITGRV…AHYQDFRIKG (88 aa)). Residues Arg18 and Asn36 contribute to the active site.

It belongs to the acylphosphatase family.

The enzyme catalyses an acyl phosphate + H2O = a carboxylate + phosphate + H(+). The polypeptide is Acylphosphatase (acyP) (Bacillus pumilus (strain SAFR-032)).